The primary structure comprises 295 residues: Aspartate carbamoyltransferase catalytic subunit (295 aa).

Residues arginine 54 and threonine 55 each contribute to the carbamoyl phosphate site. Position 82 (lysine 82) interacts with L-aspartate. 3 residues coordinate carbamoyl phosphate: arginine 104, histidine 132, and glutamine 135. Residues arginine 165 and arginine 218 each coordinate L-aspartate. Carbamoyl phosphate is bound by residues glycine 257 and proline 258.

This sequence belongs to the aspartate/ornithine carbamoyltransferase superfamily. ATCase family. Heterododecamer (2C3:3R2) of six catalytic PyrB chains organized as two trimers (C3), and six regulatory PyrI chains organized as three dimers (R2).

It catalyses the reaction carbamoyl phosphate + L-aspartate = N-carbamoyl-L-aspartate + phosphate + H(+). Its pathway is pyrimidine metabolism; UMP biosynthesis via de novo pathway; (S)-dihydroorotate from bicarbonate: step 2/3. In terms of biological role, catalyzes the condensation of carbamoyl phosphate and aspartate to form carbamoyl aspartate and inorganic phosphate, the committed step in the de novo pyrimidine nucleotide biosynthesis pathway. In Wolbachia pipientis wMel, this protein is Aspartate carbamoyltransferase catalytic subunit.